We begin with the raw amino-acid sequence, 309 residues long: Taste receptor type 2 member 124 (309 aa).

The Extracellular segment spans residues 1–7 (MVSVLHS). A helical transmembrane segment spans residues 8 to 28 (ISTIIIIAEFVWGNLSNGLIV). Residues 29–46 (LKNCLDWINIKELSTLDQ) lie on the Cytoplasmic side of the membrane. The helical transmembrane segment at 47–67 (ILILLAISRISLIWETLLMWV) threads the bilayer. The Extracellular segment spans residues 68–81 (KDKLISSITIEELK). A helical transmembrane segment spans residues 82–102 (MIMFSFMLSSHFSLWLATALS). Topologically, residues 103-127 (TFYLFRIANCSWQIFLYLKWRLKHL) are cytoplasmic. Residues 128-148 (IVQMLLGSVMFLIANIIQITI) form a helical membrane-spanning segment. Over 149 to 182 (TLEKRFYQYKGNTSVNSIQNEFALLIEMMLFNMT) the chain is Extracellular. N-linked (GlcNAc...) asparagine glycans are attached at residues N160 and N180. The helical transmembrane segment at 183–203 (IFSVIPFLLALISFFLLIFSL) threads the bilayer. The Cytoplasmic portion of the chain corresponds to 204–227 (WKHLQRMQLNSREDRDPSTKAHRN). The chain crosses the membrane as a helical span at residues 228 to 248 (ALGIMVSFLLLYTMYVLSLLI). Topologically, residues 249 to 261 (SWIAQKNQSELVH) are extracellular. A glycan (N-linked (GlcNAc...) asparagine) is linked at N255. The helical transmembrane segment at 262–282 (IICMITSLLNPSVHSSILILG) threads the bilayer. Residues 283–309 (NFKLKQSSLCILRHLGCRLKSQNTPTT) are Cytoplasmic-facing.

Belongs to the G-protein coupled receptor T2R family.

The protein localises to the membrane. Putative taste receptor which may play a role in the perception of bitterness. The sequence is that of Taste receptor type 2 member 124 from Rattus norvegicus (Rat).